Reading from the N-terminus, the 634-residue chain is Proline and serine-rich protein 3 (634 aa).

Disordered stretches follow at residues 1 to 69 (MFPK…LIDN), 81 to 142 (FRQA…TSLA), 185 to 242 (DASS…ATLK), 368 to 455 (VPPT…FEGP), and 472 to 534 (FPDS…TAPK). Over residues 15–24 (RTGATRSQRP) the composition is skewed to polar residues. Composition is skewed to low complexity over residues 40–56 (ESWP…STTE), 128–140 (VTGP…SSTS), and 185–202 (DASS…SPSS). Residues 203–215 (VTFNPDSNKSSNP) are compositionally biased toward polar residues. Residues 368–377 (VPPTSTSTTP) are compositionally biased toward low complexity. Residues 378–399 (APTPTPQVCIPGPPTSAPPPCA) show a composition bias toward pro residues. Positions 436-448 (VSTSSHQKTTVPD) are enriched in polar residues. The span at 503-515 (PESRRGSKTESRK) shows a compositional bias: basic and acidic residues. Serine 588 is modified (phosphoserine).

It is found in the cytoplasm. The protein resides in the cytoskeleton. Its subcellular location is the microtubule organizing center. It localises to the centrosome. This chain is Proline and serine-rich protein 3 (Proser3), found in Mus musculus (Mouse).